The sequence spans 231 residues: Ion-translocating oxidoreductase complex subunit E (231 aa).

The next 6 membrane-spanning stretches (helical) occupy residues 18–38 (GLVQ…LTNA), 39–59 (LGLG…VSLV), 69–89 (IPVF…FINA), 93–113 (GLYL…VIIG), 127–147 (STFD…VLGA), and 182–202 (TFLL…LIAL).

It belongs to the NqrDE/RnfAE family. In terms of assembly, the complex is composed of six subunits: RnfA, RnfB, RnfC, RnfD, RnfE and RnfG.

It is found in the cell inner membrane. Its function is as follows. Part of a membrane-bound complex that couples electron transfer with translocation of ions across the membrane. The sequence is that of Ion-translocating oxidoreductase complex subunit E from Shewanella piezotolerans (strain WP3 / JCM 13877).